Here is a 542-residue protein sequence, read N- to C-terminus: 1-aminocyclopropane-1-carboxylate synthase 6 (542 aa).

The tract at residues 1-28 (MRRSGNGGAAKKKKKRSASAASERRPRA) is disordered. N6-(pyridoxal phosphate)lysine is present on Lys379.

Belongs to the class-I pyridoxal-phosphate-dependent aminotransferase family. Pyridoxal 5'-phosphate is required as a cofactor. Expressed in leaves.

The protein localises to the plastid. The protein resides in the amyloplast membrane. The enzyme catalyses S-adenosyl-L-methionine = 1-aminocyclopropane-1-carboxylate + S-methyl-5'-thioadenosine + H(+). It functions in the pathway alkene biosynthesis; ethylene biosynthesis via S-adenosyl-L-methionine; ethylene from S-adenosyl-L-methionine: step 1/2. In terms of biological role, catalyzes the formation of 1-aminocyclopropane-1-carboxylate, a direct precursor of ethylene in higher plants. Required for the regulation of starch grain size in endosperm. The chain is 1-aminocyclopropane-1-carboxylate synthase 6 from Oryza sativa subsp. japonica (Rice).